A 257-amino-acid polypeptide reads, in one-letter code: tRNA pseudouridine synthase A (257 aa).

The active-site Nucleophile is the D53. Y111 lines the substrate pocket.

Belongs to the tRNA pseudouridine synthase TruA family. In terms of assembly, homodimer.

The catalysed reaction is uridine(38/39/40) in tRNA = pseudouridine(38/39/40) in tRNA. Functionally, formation of pseudouridine at positions 38, 39 and 40 in the anticodon stem and loop of transfer RNAs. The chain is tRNA pseudouridine synthase A from Xanthomonas euvesicatoria pv. vesicatoria (strain 85-10) (Xanthomonas campestris pv. vesicatoria).